The primary structure comprises 425 residues: Enolase (425 aa).

Gln-162 contributes to the (2R)-2-phosphoglycerate binding site. The active-site Proton donor is the Glu-204. Asp-241, Glu-282, and Asp-309 together coordinate Mg(2+). Residues Lys-334, Arg-363, Ser-364, and Lys-385 each contribute to the (2R)-2-phosphoglycerate site. The active-site Proton acceptor is the Lys-334.

Belongs to the enolase family. The cofactor is Mg(2+).

The protein resides in the cytoplasm. The protein localises to the secreted. It is found in the cell surface. The enzyme catalyses (2R)-2-phosphoglycerate = phosphoenolpyruvate + H2O. It participates in carbohydrate degradation; glycolysis; pyruvate from D-glyceraldehyde 3-phosphate: step 4/5. In terms of biological role, catalyzes the reversible conversion of 2-phosphoglycerate (2-PG) into phosphoenolpyruvate (PEP). It is essential for the degradation of carbohydrates via glycolysis. The polypeptide is Enolase (Micrococcus luteus (strain ATCC 4698 / DSM 20030 / JCM 1464 / CCM 169 / CCUG 5858 / IAM 1056 / NBRC 3333 / NCIMB 9278 / NCTC 2665 / VKM Ac-2230) (Micrococcus lysodeikticus)).